Here is a 262-residue protein sequence, read N- to C-terminus: Aminoglycoside 3'-phosphotransferase (262 aa).

The active-site Proton acceptor is the Asp-187.

The protein belongs to the aminoglycoside phosphotransferase family. Monomer.

It is found in the cytoplasm. It catalyses the reaction kanamycin A + ATP = kanamycin 3'-phosphate + ADP + H(+). Functionally, resistance to butirosin and structurally-related aminoglycosides, including kanamycin and amikacin. The protein is Aminoglycoside 3'-phosphotransferase of Niallia circulans (Bacillus circulans).